A 1034-amino-acid polypeptide reads, in one-letter code: N-acetyl-beta-glucosaminyl-glycoprotein 4-beta-N-acetylgalactosaminyltransferase 1 (1034 aa).

The Cytoplasmic portion of the chain corresponds to 1–12 (MPWFPVKKVRKQ). A helical; Signal-anchor for type II membrane protein transmembrane segment spans residues 13–31 (MKLLLLLLLLTCAAWLTYV). Residues 32–1034 (HRSLVRPGRA…SRKGARAQRS (1003 aa)) lie on the Lumenal side of the membrane. The interval 51-104 (DGEKLTGVTDSRGVRVPSSTQRSEDSSESHEEEQAPEGRGPNMLFPGGPRKPPP) is disordered. A compositionally biased stretch (basic and acidic residues) spans 72–83 (RSEDSSESHEEE). N-linked (GlcNAc...) asparagine glycosylation occurs at Asn106. In terms of domain architecture, PA14 spans 109-279 (HQTPPWREEF…LKFEIIDSAH (171 aa)). Disordered regions lie at residues 450-486 (PTDA…DEQT) and 556-600 (RVQL…QLHG). A compositionally biased stretch (low complexity) spans 461-473 (TPTPAASTGTTAS). N-linked (GlcNAc...) asparagine glycosylation occurs at Asn611. Disordered regions lie at residues 626 to 669 (SQVS…PLGR) and 782 to 801 (GDED…HPDS). Acidic residues predominate over residues 636 to 661 (EGEEGEEDGAPGDEATSEDSEEEEEP).

This sequence belongs to the chondroitin N-acetylgalactosaminyltransferase family.

Its subcellular location is the golgi apparatus. The protein localises to the golgi stack membrane. The enzyme catalyses an N-acetyl-beta-D-glucosaminyl derivative + UDP-N-acetyl-alpha-D-galactosamine = an N-acetyl-beta-D-galactosaminyl-(1-&gt;4)-N-acetyl-beta-D-glucosaminyl derivative + UDP + H(+). Its function is as follows. Transfers N-acetylgalactosamine (GalNAc) from UDP-GalNAc to N-acetylglucosamine-beta-benzyl with a beta-1,4-linkage to form N,N'-diacetyllactosediamine, GalNAc-beta-1,4-GlcNAc structures in N-linked glycans and probably O-linked glycans. The polypeptide is N-acetyl-beta-glucosaminyl-glycoprotein 4-beta-N-acetylgalactosaminyltransferase 1 (B4galnt4) (Mus musculus (Mouse)).